Here is an 83-residue protein sequence, read N- to C-terminus: MPQIGLPRLVEIIRECAGDPDERDLDGDILDVTYQDLGYDSIALLEISAKLEQDLGVSIPGEELKTPRHTLHLVNTETAGEVA.

The region spanning 3-83 (QIGLPRLVEI…VNTETAGEVA (81 aa)) is the Carrier domain. An O-(pantetheine 4'-phosphoryl)serine modification is found at Ser41.

The tetracenomycin polyketide synthase (TCM PKS) is composed of a ketosynthase complex (TcmKL), an acyl carrier protein (TcmM), a cyclase (TcmN) and a probable second cyclase (TcmJ). Pantetheine 4'-phosphate is required as a cofactor. 4'-phosphopantetheine is transferred from CoA to a specific serine of apo-ACP.

It carries out the reaction 10 malonyl-CoA + 8 H(+) = tetracenomycin F2 + 10 CO2 + 10 CoA + 2 H2O. The protein operates within antibiotic biosynthesis; tetracenomycin C biosynthesis. Its function is as follows. Involved in the biosynthesis of tetracenomycin C (TCM C). Part of a type II polyketide synthase (PKS) that catalyzes the synthesis of tetracenomycin F2 (TCM F2), a precursor of TCM C, from malonyl-CoA. TcmM is an acyl carrier protein that serves as an acceptor of malonate from malonyl-CoA and acts as the tether for the substrates and intermediates of polyketide assembly. The malonyl CoA-acyl carrier protein transacylase FabD (MCT) is required to catalyze the transacylation between malonyl-CoA and TcmM, although a relatively slow spontaneous self-malonylation of TcmM also occurs in a reaction without the MCT. The sequence is that of Tetracenomycin polyketide synthase acyl carrier protein from Streptomyces glaucescens.